The chain runs to 269 residues: 2-keto-4-pentenoate hydratase (269 aa).

This sequence belongs to the hydratase/decarboxylase family. MhpD subfamily. A divalent metal cation is required as a cofactor.

It catalyses the reaction (S)-4-hydroxy-2-oxopentanoate = (2Z)-2-hydroxypenta-2,4-dienoate + H2O. It functions in the pathway aromatic compound metabolism; 3-phenylpropanoate degradation. Its function is as follows. Catalyzes the conversion of 2-hydroxypentadienoic acid (enolic form of 2-oxopent-4-enoate) to 4-hydroxy-2-ketopentanoic acid. The polypeptide is 2-keto-4-pentenoate hydratase (Paraburkholderia xenovorans (strain LB400)).